The chain runs to 1248 residues: Structural polyprotein (1248 aa).

Positions 1–10 (MEFIPTQTFY) are enriched in polar residues. Residues 1-104 (MEFIPTQTFY…KKKKPGRRER (104 aa)) are disordered. A host transcription inhibition region spans residues 36-68 (RKAGQLAQLISAVNKLTMRAVPQQKPRKNRKNK). Positions 60-72 (KPRKNRKNKKQKQ) are enriched in basic residues. Residues 61–99 (PRKNRKNKKQKQKQQAPRNNMNQKKQPPKKKPAQKKKKP) carry the Nuclear localization signal motif. Low complexity predominate over residues 73-85 (KQQAPRNNMNQKK). The segment at 84 to 114 (KKQPPKKKPAQKKKKPGRRERMCMKIENDCI) is binding to the viral RNA. The span at 86–101 (QPPKKKPAQKKKKPGR) shows a compositional bias: basic residues. The tract at residues 99–113 (PGRRERMCMKIENDC) is ribosome-binding. An intrachain disulfide couples Cys-113 to Cys-128. One can recognise a Peptidase S3 domain in the interval 113 to 261 (CIFEVKHEGK…KITPEGAEEW (149 aa)). His-139 (charge relay system) is an active-site residue. The short motif at 144 to 154 (IDNADLAKLAF) is the Nuclear export signal element. The interval 155-160 (KRSSKY) is interaction with spike glycoprotein E2. The Charge relay system role is filled by Asp-161. The interval 183–193 (PEGYYNWHHGA) is dimerization of the capsid protein. Catalysis depends on Ser-213, which acts as the Charge relay system. The dimerization of the capsid protein stretch occupies residues 219–223 (DNKGR). The functions as an uncleaved signal peptide for the precursor of protein E3/E2 stretch occupies residues 262 to 274 (SLAIPVMCLLANT). At 262 to 692 (SLAIPVMCLL…YYYELYPTMT (431 aa)) the chain is on the extracellular side. 9 disulfides stabilise this stretch: Cys-269–Cys-278, Cys-283–Cys-287, Cys-286–Cys-318, Cys-344–Cys-450, Cys-347–Cys-353, Cys-416–Cys-430, Cys-478–Cys-591, Cys-526–Cys-550, and Cys-528–Cys-545. N-linked (GlcNAc...) asparagine; by host glycosylation occurs at Asn-273. Interaction with host Mxra8 receptor stretches follow at residues 351–354 (HSCH) and 387–389 (HDW). Interaction with host Mxra8 receptor regions lie at residues 509-512 (QSGN) and 541-547 (VINNCKV). Residues Asn-588 and Asn-670 are each glycosylated (N-linked (GlcNAc...) asparagine; by host). Residues 693 to 713 (VVVVSVASFVLLSMVGVAVGM) traverse the membrane as a helical segment. Residues 714–748 (CMCARRRCITPYELTPGATVPFLLSLICCIRTAKA) lie on the Cytoplasmic side of the membrane. Residues 716–720 (CARRR) form an interaction with the capsid protein region. Residues Cys-721, Cys-741, and Cys-742 are each lipidated (S-palmitoyl cysteine; by host). Residues 721-741 (CITPYELTPGATVPFLLSLIC) are transient transmembrane before p62-6K protein processing. Cys-721 and Cys-742 are joined by a disulfide. Topologically, residues 749 to 763 (ATYQEAAVYLWNEQQ) are extracellular. A helical transmembrane segment spans residues 764–784 (PLFWLQAIIPLAALIVLCNCL). At 785-795 (RLLPCCCKTLT) the chain is on the cytoplasmic side. A helical transmembrane segment spans residues 796-816 (FLAVMSVGAHTVSAYEHVTVI). At 817–1224 (PNTVGVPYKT…AMSWVQKITG (408 aa)) the chain is on the extracellular side. Cystine bridges form between Cys-858–Cys-923, Cys-871–Cys-903, and Cys-877–Cys-887. Residues 893-910 (VYPFMWGGAYCFCDTENT) form an E1 fusion peptide loop region. N-linked (GlcNAc...) asparagine; by host glycosylation is found at Asn-950 and Asn-1079. 4 disulfides stabilise this stretch: Cys-1068–Cys-1080, Cys-1110–Cys-1185, Cys-1115–Cys-1189, and Cys-1137–Cys-1179. The chain crosses the membrane as a helical span at residues 1225–1245 (GVGLVVAVAALILIVVLCVSF). The S-palmitoyl cysteine; by host moiety is linked to residue Cys-1242. Topologically, residues 1246-1248 (SRH) are cytoplasmic.

In terms of assembly, homodimer. Homomultimer. Interacts with host karyopherin KPNA4; this interaction allows the nuclear import of the viral capsid protein. Interacts with spike glycoprotein E2. Interacts with host IRAK1; the interaction leads to inhibition of IRAK1-dependent signaling. As to quaternary structure, the precursor of protein E3/E2 and E1 form a heterodimer shortly after synthesis. Interacts with spike glycoprotein E2. The precursor of protein E3/E2 and E1 form a heterodimer shortly after synthesis. Processing of the precursor of protein E3/E2 into E2 and E3 results in a heterodimer of the spike glycoproteins E2 and E1. Spike at virion surface are constituted of three E2-E1 heterodimers. After target cell attachment and endocytosis, E1 change conformation to form homotrimers. Interacts with 6K protein. Interacts with host MXRA8; this interaction mediates virus entry. The interaction involves 2 adjacent E2-E1 heterodimers. In terms of assembly, interacts with spike glycoprotein E1. Processing of the precursor of protein E3/E2 into E2 and E3 results in a heterodimer of the spike glycoproteins E2 and E1. Spike at virion surface are constituted of a trimer of E2-E1 heterodimers. Interacts with 6K protein. Interacts with host MXRA8; this interaction mediates virus entry. The interaction involves 2 adjacent E2-E1 heterodimers. As to quaternary structure, oligomer. Interacts with spike glycoprotein E1. Interacts with spike glycoprotein E2. In terms of processing, structural polyprotein: Specific enzymatic cleavages in vivo yield mature proteins. Capsid protein is auto-cleaved during polyprotein translation, unmasking a signal peptide at the N-terminus of the precursor of E3/E2. The remaining polyprotein is then targeted to the host endoplasmic reticulum, where host signal peptidase cleaves it into pE2, 6K and E1 proteins. pE2 is further processed to mature E3 and E2 by host furin in trans-Golgi vesicle. Post-translationally, palmitoylated via thioester bonds. These palmitoylations may induce disruption of the C-terminus transmembrane. This would result in the reorientation of E2 C-terminus from lumenal to cytoplasmic side. N-glycosylated. In terms of processing, palmitoylated via thioester bonds.

The protein resides in the virion. It localises to the host cytoplasm. Its subcellular location is the host cell membrane. The protein localises to the host nucleus. It is found in the virion membrane. The protein resides in the host Golgi apparatus. It localises to the host trans-Golgi network. Its subcellular location is the host endoplasmic reticulum. It carries out the reaction Autocatalytic release of the core protein from the N-terminus of the togavirus structural polyprotein by hydrolysis of a -Trp-|-Ser- bond.. Functionally, forms an icosahedral capsid with a T=4 symmetry composed of 240 copies of the capsid protein surrounded by a lipid membrane through which penetrate 80 spikes composed of trimers of E1-E2 heterodimers. The capsid protein binds to the viral RNA genome at a site adjacent to a ribosome binding site for viral genome translation following genome release. Possesses a protease activity that results in its autocatalytic cleavage from the nascent structural protein. Following its self-cleavage, the capsid protein transiently associates with ribosomes, and within several minutes the protein binds to viral RNA and rapidly assembles into icosahedric core particles. The resulting nucleocapsid eventually associates with the cytoplasmic domain of the spike glycoprotein E2 at the cell membrane, leading to budding and formation of mature virions. In case of infection, new virions attach to target cells and after clathrin-mediated endocytosis their membrane fuses with the host endosomal membrane. This leads to the release of the nucleocapsid into the cytoplasm, followed by an uncoating event necessary for the genomic RNA to become accessible. The uncoating might be triggered by the interaction of capsid proteins with ribosomes. Binding of ribosomes would release the genomic RNA since the same region is genomic RNA-binding and ribosome-binding. Specifically inhibits interleukin-1 receptor-associated kinase 1/IRAK1-dependent signaling during viral entry, representing a means by which the alphaviruses may evade innate immune detection and activation prior to viral gene expression. Degrades host cyclic GMP-AMP synthase (CGAS) thereby inhibiting the cGAS-STING pathway. In terms of biological role, provides the signal sequence for the translocation of the precursor of protein E3/E2 to the host endoplasmic reticulum. Furin-cleaved E3 remains associated with spike glycoprotein E1 and mediates pH protection of the latter during the transport via the secretory pathway. After virion release from the host cell, the assembly protein E3 is gradually released in the extracellular space. Its function is as follows. Plays a role in viral attachment to target host cell, by binding to the cell receptor MXRA8. Synthesized as a p62 precursor which is processed by furin at the cell membrane just before virion budding, giving rise to E2-E1 heterodimer. The p62-E1 heterodimer is stable, whereas E2-E1 is unstable and dissociate at low pH. p62 is processed at the last step, presumably to avoid E1 fusion activation before its final export to cell surface. E2 C-terminus contains a transitory transmembrane that would be disrupted by palmitoylation, resulting in reorientation of the C-terminal tail from lumenal to cytoplasmic side. This step is critical since E2 C-terminus is involved in budding by interacting with capsid proteins. This release of E2 C-terminus in cytoplasm occurs lately in protein export, and precludes premature assembly of particles at the endoplasmic reticulum membrane. Acts as a viroporin that participates in virus glycoprotein processing and transport to the plasma membrane, cell permeabilization and budding of viral particles. Disrupts the calcium homeostasis of the cell, probably at the endoplasmic reticulum level. This leads to cytoplasmic calcium elevation. Because of its lipophilic properties, the 6K protein is postulated to influence the selection of lipids that interact with the transmembrane domains of the glycoproteins, which, in turn, affects the deformability of the bilayer required for the extreme curvature that occurs as budding proceeds. Present in low amount in virions, about 3% compared to viral glycoproteins. Functionally, class II viral fusion protein. Fusion activity is inactive as long as E1 is bound to E2 in mature virion. After virus attachment to target cell via host MXRA8 and endocytosis, acidification of the endosome induce dissociation of E1/E2 heterodimer and concomitant trimerization of the E1 subunits. This E1 trimer is fusion active, and promotes release of viral nucleocapsid in cytoplasm after endosome and viral membrane fusion. Efficient fusion requires the presence of cholesterol and sphingolipid in the target membrane. This is Structural polyprotein from Chikungunya virus (strain Nagpur) (CHIKV).